Consider the following 74-residue polypeptide: Protein SlyX homolog (74 aa).

It belongs to the SlyX family.

The polypeptide is Protein SlyX homolog (Neisseria meningitidis serogroup C / serotype 2a (strain ATCC 700532 / DSM 15464 / FAM18)).